A 154-amino-acid chain; its full sequence is Transcription antitermination protein NusB (154 aa).

It belongs to the NusB family.

Functionally, involved in transcription antitermination. Required for transcription of ribosomal RNA (rRNA) genes. Binds specifically to the boxA antiterminator sequence of the ribosomal RNA (rrn) operons. The protein is Transcription antitermination protein NusB of Desulfosudis oleivorans (strain DSM 6200 / JCM 39069 / Hxd3) (Desulfococcus oleovorans).